The chain runs to 802 residues: Leucine--tRNA ligase (802 aa).

The 'HIGH' region signature appears at 40 to 51 (PYPSGAGLHVGH). The 'KMSKS' region signature appears at 576–580 (KMSKS). Position 579 (lysine 579) interacts with ATP.

Belongs to the class-I aminoacyl-tRNA synthetase family.

It localises to the cytoplasm. It catalyses the reaction tRNA(Leu) + L-leucine + ATP = L-leucyl-tRNA(Leu) + AMP + diphosphate. The sequence is that of Leucine--tRNA ligase from Bacillus thuringiensis subsp. konkukian (strain 97-27).